Consider the following 84-residue polypeptide: Gomesin (84 aa).

An N-terminal signal peptide occupies residues 1-23; it reads MNRTRLFACLLLAVLILVHESNA. Pyrrolidone carboxylic acid is present on Q24. 2 disulfide bridges follow: C25/C38 and C29/C34. The residue at position 41 (R41) is an Arginine amide. A propeptide spanning residues 42-84 is cleaved from the precursor; it reads GKRSLDETNVGTSDVEKRAFDDSNVPSLVEERELEDEGSFIFD.

In hemocytes only, but not in all hemocytes observed.

The protein resides in the secreted. In terms of biological role, active against several Gram-positive bacteria such as Bacillus spp, Staphylococcus spp and E.faecalis, several Gram-negative bacteria such as E.coli, K.pneumoniae, P.aeruginosa and Salmonella spp, filamentous fungi such as N.crassa, T.viridae and yeasts such as C.albicans. It is active against the parasite L.amazonensis as well. It shows hemolytic activity. This Acanthoscurria gomesiana (Tarantula spider) protein is Gomesin.